The chain runs to 242 residues: Proteasome subunit alpha (242 aa).

The protein belongs to the peptidase T1A family. As to quaternary structure, the 20S proteasome core is composed of 14 alpha and 14 beta subunits that assemble into four stacked heptameric rings, resulting in a barrel-shaped structure. The two inner rings, each composed of seven catalytic beta subunits, are sandwiched by two outer rings, each composed of seven alpha subunits. The catalytic chamber with the active sites is on the inside of the barrel. Has a gated structure, the ends of the cylinder being occluded by the N-termini of the alpha-subunits. Is capped by the proteasome-associated ATPase, ARC.

It localises to the cytoplasm. Its pathway is protein degradation; proteasomal Pup-dependent pathway. Its activity is regulated as follows. The formation of the proteasomal ATPase ARC-20S proteasome complex, likely via the docking of the C-termini of ARC into the intersubunit pockets in the alpha-rings, may trigger opening of the gate for substrate entry. Interconversion between the open-gate and close-gate conformations leads to a dynamic regulation of the 20S proteasome proteolysis activity. In terms of biological role, component of the proteasome core, a large protease complex with broad specificity involved in protein degradation. The chain is Proteasome subunit alpha from Renibacterium salmoninarum (strain ATCC 33209 / DSM 20767 / JCM 11484 / NBRC 15589 / NCIMB 2235).